A 202-amino-acid chain; its full sequence is Securin (202 aa).

Residues 1–92 (MATLIYVDKE…QKQPSFSAKK (92 aa)) form a disordered region. Ala-2 is modified (N-acetylalanine). Residues 61–64 (RKAL) carry the D-box motif. Short sequence motifs (TEK-box) lie at residues 71-73 (TEK) and 94-96 (TEK). Positions 163–173 (XPSPVKMPSPP) match the SH3-binding motif. Position 165 is a phosphoserine; by CDK1 (Ser-165).

This sequence belongs to the securin family. Interacts with RPS10 and DNAJA1. Interacts with the caspase-like ESPL1, and prevents its protease activity probably by covering its active site. Interacts with TP53 and blocks its activity probably by blocking its binding to DNA. Interacts with the Ku 70 kDa subunit of ds-DNA kinase. Interacts with PTTG1IP. In terms of processing, phosphorylated at Ser-165 by CDK1 during mitosis. Phosphorylated in vitro by ds-DNA kinase. Post-translationally, ubiquitinated through 'Lys-11' linkage of ubiquitin moieties by the anaphase promoting complex (APC) at the onset of anaphase, conducting to its degradation. 'Lys-11'-linked ubiquitination is mediated by the E2 ligase UBE2C/UBCH10.

The protein resides in the cytoplasm. It is found in the nucleus. Its function is as follows. Regulatory protein, which plays a central role in chromosome stability, in the p53/TP53 pathway, and DNA repair. Probably acts by blocking the action of key proteins. During the mitosis, it blocks Separase/ESPL1 function, preventing the proteolysis of the cohesin complex and the subsequent segregation of the chromosomes. At the onset of anaphase, it is ubiquitinated, conducting to its destruction and to the liberation of ESPL1. Its function is however not limited to a blocking activity, since it is required to activate ESPL1. Negatively regulates the transcriptional activity and related apoptosis activity of TP53. The negative regulation of TP53 may explain the strong transforming capability of the protein when it is overexpressed. May also play a role in DNA repair via its interaction with Ku, possibly by connecting DNA damage-response pathways with sister chromatid separation. In Pan troglodytes (Chimpanzee), this protein is Securin (PTTG1).